A 415-amino-acid chain; its full sequence is Serine hydroxymethyltransferase (415 aa).

Residues Leu-117 and 121–123 (GHL) each bind (6S)-5,6,7,8-tetrahydrofolate. Position 225 is an N6-(pyridoxal phosphate)lysine (Lys-225). (6S)-5,6,7,8-tetrahydrofolate contacts are provided by residues Glu-241 and 349-351 (SPF).

The protein belongs to the SHMT family. Homodimer. The cofactor is pyridoxal 5'-phosphate.

Its subcellular location is the cytoplasm. The enzyme catalyses (6R)-5,10-methylene-5,6,7,8-tetrahydrofolate + glycine + H2O = (6S)-5,6,7,8-tetrahydrofolate + L-serine. It functions in the pathway one-carbon metabolism; tetrahydrofolate interconversion. It participates in amino-acid biosynthesis; glycine biosynthesis; glycine from L-serine: step 1/1. Functionally, catalyzes the reversible interconversion of serine and glycine with tetrahydrofolate (THF) serving as the one-carbon carrier. This reaction serves as the major source of one-carbon groups required for the biosynthesis of purines, thymidylate, methionine, and other important biomolecules. Also exhibits THF-independent aldolase activity toward beta-hydroxyamino acids, producing glycine and aldehydes, via a retro-aldol mechanism. In Campylobacter hominis (strain ATCC BAA-381 / DSM 21671 / CCUG 45161 / LMG 19568 / NCTC 13146 / CH001A), this protein is Serine hydroxymethyltransferase.